The following is a 953-amino-acid chain: 26S proteasome non-ATPase regulatory subunit 1 (953 aa).

N-acetylmethionine; partial is present on Met-1. At Thr-273 the chain carries Phosphothreonine. Residues 279–318 (PGSTNTGTVPGSEKDSDSMETEEKTGSAFVGKTPEASPEP) are disordered. At Ser-290 the chain carries Phosphoserine. The span at 290–303 (SEKDSDSMETEEKT) shows a compositional bias: basic and acidic residues. Position 310 is an N6-acetyllysine (Lys-310). Phosphothreonine is present on Thr-311. Residue Ser-315 is modified to Phosphoserine. PC repeat units follow at residues 403–436 (TATA…PGSA), 441–474 (GGLY…DIVR), 476–510 (GGSL…VTGE), 511–545 (AAGL…EKIL), 547–580 (GLAV…ILRR), 581–616 (SGMY…DVRR), 617–649 (AAVE…PHVR), 651–685 (GAAM…YVRQ), 686–726 (GALI…DVMA), and 729–761 (GAIL…PSVV). Lys-720 carries the N6-acetyllysine modification. At Thr-830 the chain carries Phosphothreonine. Ser-834 bears the Phosphoserine mark. 2 disordered regions span residues 839–881 (AKKK…LDNP) and 930–953 (AHGP…YIDD). Basic and acidic residues-rich tracts occupy residues 842 to 852 (KEKEKEKKEEE) and 859 to 872 (AEKK…KEPE). A compositionally biased stretch (acidic residues) spans 936-953 (EEEEQEPEPPEPFEYIDD).

It belongs to the proteasome subunit S1 family. Component of the 19S proteasome regulatory particle complex. The 26S proteasome consists of a 20S core particle (CP) and two 19S regulatory subunits (RP). The regulatory particle is made of a lid composed of 9 subunits, a base containing 6 ATPases and few additional components including PSMD1. Interacts with ADRM1. Interacts with ZFAND1.

In terms of biological role, component of the 26S proteasome, a multiprotein complex involved in the ATP-dependent degradation of ubiquitinated proteins. This complex plays a key role in the maintenance of protein homeostasis by removing misfolded or damaged proteins, which could impair cellular functions, and by removing proteins whose functions are no longer required. Therefore, the proteasome participates in numerous cellular processes, including cell cycle progression, apoptosis, or DNA damage repair. This Pongo abelii (Sumatran orangutan) protein is 26S proteasome non-ATPase regulatory subunit 1 (PSMD1).